A 60-amino-acid chain; its full sequence is Large ribosomal subunit protein uL30 (60 aa).

Belongs to the universal ribosomal protein uL30 family. In terms of assembly, part of the 50S ribosomal subunit.

In Lachnoclostridium phytofermentans (strain ATCC 700394 / DSM 18823 / ISDg) (Clostridium phytofermentans), this protein is Large ribosomal subunit protein uL30.